Consider the following 308-residue polypeptide: MILEDLLMVLSCLALHILWKVQAVPILPLSLVPDTFDDAYVGCSEEMEEKAGLLLKEEMARHALLRESWEAAQEAWAHGRHKLTLPPGFKAQHGVAVMVYTNSSNTLYWELNQAVRTGGRSRELYMRHFPFKALHFYLTRALQLLRGTGGCSREAGEVVFRGVSSLHFEPKRLGDSVRLGQFASSSVDERVARRFGNATFFNLRTCFGAPIQALSVFPEEREVLIPPHEVFLVTGFSQDGAQSIVTLWSYNQTCSHFNCAYLGGEKRRGCVSSRAGQPESFSTEALALQSGKTLLLAPGELQLSRAGP.

An N-terminal signal peptide occupies residues 1–23; sequence MILEDLLMVLSCLALHILWKVQA. Cys43 and Cys259 are oxidised to a cystine. The region spanning 63–253 is the TR mART core domain; the sequence is ALLRESWEAA…IVTLWSYNQT (191 aa). Tyr100 is a binding site for NAD(+). Residue Asn102 is glycosylated (N-linked (GlcNAc...) asparagine). Arg161 and Gln181 together coordinate NAD(+). Arg161 is an active-site residue. Residue Ser184 is part of the active site. An N-linked (GlcNAc...) asparagine glycan is attached at Asn197. An NAD(+)-binding site is contributed by Ser215. Glu222 is a catalytic residue. The N-linked (GlcNAc...) asparagine glycan is linked to Asn251.

The protein belongs to the Arg-specific ADP-ribosyltransferase family.

It is found in the secreted. Its subcellular location is the membrane. It catalyses the reaction L-arginyl-[protein] + NAD(+) = N(omega)-(ADP-D-ribosyl)-L-arginyl-[protein] + nicotinamide + H(+). This chain is Ecto-ADP-ribosyltransferase 5 (Art5), found in Rattus norvegicus (Rat).